Consider the following 136-residue polypeptide: Large ribosomal subunit protein uL16c (136 aa).

This sequence belongs to the universal ribosomal protein uL16 family. In terms of assembly, part of the 50S ribosomal subunit.

The protein resides in the plastid. It is found in the chloroplast. The sequence is that of Large ribosomal subunit protein uL16c from Chloranthus spicatus (Chulantree).